A 356-amino-acid polypeptide reads, in one-letter code: UDP-N-acetylglucosamine--N-acetylmuramyl-(pentapeptide) pyrophosphoryl-undecaprenol N-acetylglucosamine transferase (356 aa).

UDP-N-acetyl-alpha-D-glucosamine contacts are provided by residues 12-14 (TGG), Asn124, Arg163, Ser188, Ile242, 261-266 (ALTVSE), and Gln287.

It belongs to the glycosyltransferase 28 family. MurG subfamily.

It localises to the cell inner membrane. It catalyses the reaction di-trans,octa-cis-undecaprenyl diphospho-N-acetyl-alpha-D-muramoyl-L-alanyl-D-glutamyl-meso-2,6-diaminopimeloyl-D-alanyl-D-alanine + UDP-N-acetyl-alpha-D-glucosamine = di-trans,octa-cis-undecaprenyl diphospho-[N-acetyl-alpha-D-glucosaminyl-(1-&gt;4)]-N-acetyl-alpha-D-muramoyl-L-alanyl-D-glutamyl-meso-2,6-diaminopimeloyl-D-alanyl-D-alanine + UDP + H(+). It participates in cell wall biogenesis; peptidoglycan biosynthesis. Functionally, cell wall formation. Catalyzes the transfer of a GlcNAc subunit on undecaprenyl-pyrophosphoryl-MurNAc-pentapeptide (lipid intermediate I) to form undecaprenyl-pyrophosphoryl-MurNAc-(pentapeptide)GlcNAc (lipid intermediate II). This is UDP-N-acetylglucosamine--N-acetylmuramyl-(pentapeptide) pyrophosphoryl-undecaprenol N-acetylglucosamine transferase from Ectopseudomonas mendocina (strain ymp) (Pseudomonas mendocina).